The sequence spans 110 residues: UPF0145 protein Blon_0093/BLIJ_0092 (110 aa).

It belongs to the UPF0145 family.

This is UPF0145 protein Blon_0093/BLIJ_0092 from Bifidobacterium longum subsp. infantis (strain ATCC 15697 / DSM 20088 / JCM 1222 / NCTC 11817 / S12).